Consider the following 336-residue polypeptide: Fructose-1,6-bisphosphatase class 1 (336 aa).

Positions 90, 112, 114, and 115 each coordinate Mg(2+). Substrate contacts are provided by residues Asp115–Ser118, Asn211, and Lys277. Mg(2+) is bound at residue Glu283.

It belongs to the FBPase class 1 family. In terms of assembly, homotetramer. The cofactor is Mg(2+).

It localises to the cytoplasm. The enzyme catalyses beta-D-fructose 1,6-bisphosphate + H2O = beta-D-fructose 6-phosphate + phosphate. The protein operates within carbohydrate biosynthesis; gluconeogenesis. In Pseudomonas syringae pv. syringae (strain B728a), this protein is Fructose-1,6-bisphosphatase class 1.